The primary structure comprises 76 residues: Defensin-like protein 5 (76 aa).

A signal peptide spans 1-29; it reads MKVSPRLNSALLLLFMILATVMGLVTVEA. Disulfide bonds link Cys-32-Cys-76, Cys-43-Cys-63, Cys-49-Cys-70, and Cys-53-Cys-72.

It belongs to the DEFL family.

It is found in the secreted. In terms of biological role, confers broad-spectrum resistance to pathogens. This chain is Defensin-like protein 5 (PDF2.4), found in Arabidopsis thaliana (Mouse-ear cress).